The primary structure comprises 267 residues: Cysteine protease avirulence protein AvrPphB (267 aa).

Gly-63 carries the N-myristoyl glycine; by host lipid modification. Active-site residues include Cys-98, His-212, and Asp-227.

Belongs to the peptidase C58 family. In terms of assembly, in infected plant cells, the 28 kDa product interacts with PBS1. In terms of processing, autocleaved. This function is essential for myristoylation in infected plant cell and for eliciting the plant hypersensitive response. Myristoylation of 28 kDa product in infected plant cells; it mediates the localization to membranes.

It is found in the secreted. It localises to the host membrane. In terms of biological role, cysteine protease avirulence protein, which is essential during infection of plant cells from cultivar-specific of beans and Arabidopsis thaliana. The autocleavage of the protein is required for virulence function. May act by affecting the plant defense system. In plants lacking R3 or RPS5 resistance genes, it probably impairs the plant defense system and leads to the bacteria multiplication. In contrast, in plants containing the R3 or RPS5 protein, it is unable to induce disease symptoms, explaining its avirulence name. The 7 kDa product is required for the type-III translocation from Pseudomonas strains to the plant, but are partially dispensable for effector recognition following in planta expression. In infected plants, it acts by cleaving the PBS1 protein, which leads to resistance or disease, depending on the presence or absence of RPS5, respectively. Targets the Arabidopsis kinases PBS1, BIK1, PBL1, PBL2, PBL3, PBL5, PBL7, PBL9 and PBL11 for cleavage in vitro. Can block recognition of AvrB avirulence factor by plant cells by cleaving Arabidopsis RIPK kinase and suppressing Arabidopsis RPM1 activation. Cannot block AvrRpm1-induced activation of RPM1. This Pseudomonas savastanoi pv. phaseolicola (Pseudomonas syringae pv. phaseolicola) protein is Cysteine protease avirulence protein AvrPphB (avrPph3).